The sequence spans 426 residues: Putative acid phosphatase 1 (426 aa).

The first 18 residues, 1-18 (MRVLFYVFPFVIFALSQA), serve as a signal peptide directing secretion. Over 19 to 388 (QLISVHVIFR…HNWTMTTVSW (370 aa)) the chain is Extracellular. The Nucleophile role is filled by histidine 29. 2 N-linked (GlcNAc...) asparagine glycosylation sites follow: asparagine 37 and asparagine 145. Cysteines 133 and 369 form a disulfide. Aspartate 276 acts as the Proton donor in catalysis. A glycan (N-linked (GlcNAc...) asparagine) is linked at asparagine 380. A helical membrane pass occupies residues 389–409 (ILIGISAFLLIILIIMSYLAV). At 410–426 (RYKNRSVVTIKKVCLEN) the chain is on the cytoplasmic side.

It belongs to the histidine acid phosphatase family.

It is found in the membrane. It carries out the reaction a phosphate monoester + H2O = an alcohol + phosphate. This Caenorhabditis briggsae protein is Putative acid phosphatase 1.